Here is a 464-residue protein sequence, read N- to C-terminus: E3 ubiquitin-protein ligase parkin (464 aa).

One can recognise a Ubiquitin-like domain in the interval M1–R76. Phosphoserine; by PINK1 is present on S65. Positions V70–I96 are disordered. Residues S77 to P236 are necessary for PINK1-dependent localization to mitochondria. A Phosphothreonine modification is found at T80. Residues T80–I96 show a composition bias toward polar residues. An RING-type 0; atypical zinc finger spans residues P140–A224. At T174 the chain carries Phosphothreonine; by PINK1. The interval T203 to C237 is SYT11 binding 1. The residue at position 216 (T216) is a Phosphothreonine. The segment at R233–V464 is TRIAD supradomain. Zn(2+) contacts are provided by C237, C240, C252, H256, C259, C262, C288, C292, C331, and C336. The segment at C237–C292 adopts an RING-type 1 zinc-finger fold. Residues H256–C292 are SYT11 binding 2. The segment at T312–C376 adopts an IBR-type zinc-finger fold. A Glycyl lysine isopeptide (Lys-Gly) (interchain with G-Cter in ISG15) cross-link involves residue K348. Residues C351, C359, C364, and C367 each contribute to the Zn(2+) site. A Glycyl lysine isopeptide (Lys-Gly) (interchain with G-Cter in ISG15) cross-link involves residue K368. 2 residues coordinate Zn(2+): H372 and C376. Positions D377–T409 are REP. Residues C417 and C420 each coordinate Zn(2+). The RING-type 2; atypical zinc-finger motif lies at C417–C448. C430 is an active-site residue. C435, C440, C445, C448, C456, and H460 together coordinate Zn(2+).

The protein belongs to the RBR family. Parkin subfamily. Forms an E3 ubiquitin ligase complex with UBE2L3 or UBE2L6. Mediates 'Lys-63'-linked polyubiquitination by associating with UBE2V1. Part of a SCF-like complex, consisting of PRKN, CUL1 and FBXW7. Interacts with SNCAIP. Binds to the C2A and C2B domains of SYT11. Interacts and regulates the turnover of SEPTIN5. Part of a complex, including STUB1, HSP70 and GPR37. The amount of STUB1 in the complex increases during ER stress. STUB1 promotes the dissociation of HSP70 from PRKN and GPR37, thus facilitating PRKN-mediated GPR37 ubiquitination. HSP70 transiently associates with unfolded GPR37 and inhibits the E3 activity of PRKN, whereas, STUB1 enhances the E3 activity of PRKN through promotion of dissociation of HSP70 from PRKN-GPR37 complexes. Interacts with PSMD4 and PACRG. Interacts with LRRK2. Interacts with RANBP2. Interacts with SUMO1 but not SUMO2, which promotes nuclear localization and autoubiquitination. Interacts (via first RING-type domain) with AIMP2 (via N-terminus). Interacts with PSMA7 and RNF41. Interacts with PINK1. Forms a complex with PINK1 and PARK7. Interacts with CHPF, the interaction with isoform 2 may facilitate PRKN transport into the mitochondria. Interacts with MFN2 (phosphorylated), promotes PRKN localization in dysfunctional depolarized mitochondria. Interacts with FBXO7; this promotes translocation to dysfunctional depolarized mitochondria. Interacts with ZNF746. Interacts with heat shock protein 70 family members, including HSPA1L, HSPA1A and HSPA8; interaction HSPA1L promotes translocation to damaged mitochondria. Interacts with BAG4 and, to a lesser extent, BAG5; interaction with BAG4 inhibits translocation to damaged mitochondria. Forms a complex with PRKN and PARK7. Interacts with AMBRA1. Auto-ubiquitinates in an E2-dependent manner leading to its own degradation. Also polyubiquitinated by RNF41 for proteasomal degradation. In terms of processing, S-nitrosylated. Post-translationally, phosphorylated. Activation requires phosphorylation at Ser-65 by PINK1 and binding to PINK1 phosphorylated ubiquitin. Phosphorylation at Thr-174 by PINK1 and at Thr-216 is important for mitochondrial localization. As to expression, expressed in all subdivisions of the brain (at protein level). Highly expressed in brainstem, cranial nerve, pontine, cerebellar nuclei, indusium griseum, nuclei reticularis, strata oriens and laccunosum moleculare of the hippocampal CA2 region. Low levels were found in the telencephalon and diencephalon. Expressed in heart, liver, skeletal muscle, kidney and testis.

The protein localises to the cytoplasm. It localises to the cytosol. It is found in the nucleus. Its subcellular location is the endoplasmic reticulum. The protein resides in the mitochondrion. The protein localises to the mitochondrion outer membrane. It localises to the cell projection. It is found in the neuron projection. Its subcellular location is the postsynaptic density. The protein resides in the presynapse. The enzyme catalyses [E2 ubiquitin-conjugating enzyme]-S-ubiquitinyl-L-cysteine + [acceptor protein]-L-lysine = [E2 ubiquitin-conjugating enzyme]-L-cysteine + [acceptor protein]-N(6)-ubiquitinyl-L-lysine.. It participates in protein modification; protein ubiquitination. With respect to regulation, in the autoinhibited state the side chain of Phe-462 inserts into a hydrophobic groove in RING-0, occluding the ubiquitin acceptor site Cys-430, whereas the REP repressor element binds RING-1 and blocks its E2-binding site. Activation of PRKN requires 2 steps: (1) phosphorylation at Ser-65 by PINK1 and (2) binding to phosphorylated ubiquitin, leading to unlock repression of the catalytic Cys-430 by the RING-0 region via an allosteric mechanism and converting PRKN to its fully-active form. According to another report, phosphorylation at Ser-65 by PINK1 is not essential for activation and only binding to phosphorylated ubiquitin is essential to unlock repression. In addition, ISG15 conjugation positively regulates its ubiquitin E3 ligase activity by suppressing the intramolecular interaction that maintains its autoinhibited conformation. Its function is as follows. Functions within a multiprotein E3 ubiquitin ligase complex, catalyzing the covalent attachment of ubiquitin moieties onto substrate proteins. Substrates include SYT11 and VDAC1. Other substrates are BCL2, CCNE1, GPR37, RHOT1/MIRO1, MFN1, MFN2, STUB1, SNCAIP, SEPTIN5, TOMM20, USP30, ZNF746, MIRO1 and AIMP2. Mediates monoubiquitination as well as 'Lys-6', 'Lys-11', 'Lys-48'-linked and 'Lys-63'-linked polyubiquitination of substrates depending on the context. Participates in the removal and/or detoxification of abnormally folded or damaged protein by mediating 'Lys-63'-linked polyubiquitination of misfolded proteins such as PARK7: 'Lys-63'-linked polyubiquitinated misfolded proteins are then recognized by HDAC6, leading to their recruitment to aggresomes, followed by degradation. Mediates 'Lys-63'-linked polyubiquitination of a 22 kDa O-linked glycosylated isoform of SNCAIP, possibly playing a role in Lewy-body formation. Mediates monoubiquitination of BCL2, thereby acting as a positive regulator of autophagy. Protects against mitochondrial dysfunction during cellular stress, by acting downstream of PINK1 to coordinate mitochondrial quality control mechanisms that remove and replace dysfunctional mitochondrial components. Depending on the severity of mitochondrial damage and/or dysfunction, activity ranges from preventing apoptosis and stimulating mitochondrial biogenesis to regulating mitochondrial dynamics and eliminating severely damaged mitochondria via mitophagy. Activation and recruitment onto the outer membrane of damaged/dysfunctional mitochondria (OMM) requires PINK1-mediated phosphorylation of both PRKN and ubiquitin. After mitochondrial damage, functions with PINK1 to mediate the decision between mitophagy or preventing apoptosis by inducing either the poly- or monoubiquitination of VDAC1, respectively; polyubiquitination of VDAC1 promotes mitophagy, while monoubiquitination of VDAC1 decreases mitochondrial calcium influx which ultimately inhibits apoptosis. When cellular stress results in irreversible mitochondrial damage, promotes the autophagic degradation of dysfunctional depolarized mitochondria (mitophagy) by promoting the ubiquitination of mitochondrial proteins such as TOMM20, RHOT1/MIRO1, MFN1 and USP30. Preferentially assembles 'Lys-6'-, 'Lys-11'- and 'Lys-63'-linked polyubiquitin chains, leading to mitophagy. The PINK1-PRKN pathway also promotes fission of damaged mitochondria by PINK1-mediated phosphorylation which promotes the PRKN-dependent degradation of mitochondrial proteins involved in fission such as MFN2. This prevents the refusion of unhealthy mitochondria with the mitochondrial network or initiates mitochondrial fragmentation facilitating their later engulfment by autophagosomes. Regulates motility of damaged mitochondria via the ubiquitination and subsequent degradation of MIRO1 and MIRO2; in motor neurons, this likely inhibits mitochondrial intracellular anterograde transport along the axons which probably increases the chance of the mitochondria undergoing mitophagy in the soma. Involved in mitochondrial biogenesis via the 'Lys-48'-linked polyubiquitination of transcriptional repressor ZNF746/PARIS which leads to its subsequent proteasomal degradation and allows activation of the transcription factor PPARGC1A. Limits the production of reactive oxygen species (ROS). Regulates cyclin-E during neuronal apoptosis. In collaboration with CHPF isoform 2, may enhance cell viability and protect cells from oxidative stress. Independently of its ubiquitin ligase activity, protects from apoptosis by the transcriptional repression of p53/TP53. May protect neurons against alpha synuclein toxicity, proteasomal dysfunction, GPR37 accumulation, and kainate-induced excitotoxicity. May play a role in controlling neurotransmitter trafficking at the presynaptic terminal and in calcium-dependent exocytosis. May represent a tumor suppressor gene. This is E3 ubiquitin-protein ligase parkin from Mus musculus (Mouse).